Here is a 681-residue protein sequence, read N- to C-terminus: Sterile alpha motif domain-containing protein 11 (681 aa).

4 disordered regions span residues 41–77, 212–234, 251–307, and 407–498; these read RNLK…EDGP, YHLG…HLPS, GPSG…APHV, and LLAL…GAEG. Residue lysine 72 forms a Glycyl lysine isopeptide (Lys-Gly) (interchain with G-Cter in SUMO2) linkage. The span at 219–234 shows a compositional bias: basic and acidic residues; it reads HGEDPPWHDPPHHLPS. Residues 412–423 are compositionally biased toward pro residues; the sequence is PQGPPGSGPPTP. A Phosphothreonine modification is found at threonine 485. The SAM domain maps to 543-608; it reads WTVDDVCSFV…AQVARRLGRV (66 aa). Residues 625–681 form a disordered region; that stretch reads LRAPERELGTGEQPLSPTTATSPYGGGHALAGQTSPKQENGTLALLPGAPDPSQPLC. 2 stretches are compositionally biased toward polar residues: residues 637-646 and 656-665; these read QPLSPTTATS and GQTSPKQENG. Position 640 is a phosphoserine (serine 640).

In terms of assembly, self-associates. Component of a Polycomb group (PcG) multiprotein PRC1-like complex. Interacts with SAMD7 and PHC2. As to expression, expressed in the outer and inner nuclear layers, ganglion cell layer and rod photoreceptors of the retina (at protein level). Widely expressed, showing the highest expression in kidney, prostate and retina.

Its subcellular location is the nucleus. In terms of biological role, component of a Polycomb group (PcG) multiprotein PRC1-like complex, essential for establishing rod photoreceptor cell identity and function by silencing nonrod gene expression in developing rod photoreceptor cells. This chain is Sterile alpha motif domain-containing protein 11 (SAMD11), found in Homo sapiens (Human).